The primary structure comprises 218 residues: Cytochrome c biogenesis ATP-binding export protein CcmA (218 aa).

The region spanning 2–217 (LEAKNLTCIR…KSCLSACCAV (216 aa)) is the ABC transporter domain. Residue 34-41 (GPNGAGKT) participates in ATP binding.

It belongs to the ABC transporter superfamily. CcmA exporter (TC 3.A.1.107) family. The complex is composed of two ATP-binding proteins (CcmA) and two transmembrane proteins (CcmB).

It is found in the cell inner membrane. The enzyme catalyses heme b(in) + ATP + H2O = heme b(out) + ADP + phosphate + H(+). Functionally, part of the ABC transporter complex CcmAB involved in the biogenesis of c-type cytochromes; once thought to export heme, this seems not to be the case, but its exact role is uncertain. Responsible for energy coupling to the transport system. In Yersinia pestis, this protein is Cytochrome c biogenesis ATP-binding export protein CcmA.